A 432-amino-acid chain; its full sequence is Crenactin (432 aa).

ATP is bound by residues 20-24 (TSYVK), 182-184 (GGH), 235-239 (EVVKR), 354-358 (GAFSW), and Gln399.

Belongs to the actin family. As to quaternary structure, monomer. The crenactin monomers polymerize into right-handed helical filaments, with 8 subunits per complete turn of the helix. Forms single-stranded filaments under high salt concentrations and double-stranded filaments under low salt concentrations. Interacts with arcadin-1 and arcadin-2.

It localises to the cytoplasm. The protein localises to the cytoskeleton. It catalyses the reaction ATP + H2O = ADP + phosphate + H(+). Its activity is regulated as follows. Crenactin polymerization is inhibited by interaction with arcadin-2. Also significantly inhibited by elevated antibiotic A22 concentrations. In terms of biological role, forms the backbone of an actin-like archaeal cytoskeleton, which is involved in cell shape determination. Has ATPase activity. Shows highest activity towards ATP or GTP as nucleotide, and only residual activity on UTP, CTP and dNTPs. The polypeptide is Crenactin (Pyrobaculum calidifontis (strain DSM 21063 / JCM 11548 / VA1)).